We begin with the raw amino-acid sequence, 159 residues long: Ribosomal RNA large subunit methyltransferase H (159 aa).

S-adenosyl-L-methionine contacts are provided by residues L76, G108, and 127–132 (FSKMTF).

The protein belongs to the RNA methyltransferase RlmH family. As to quaternary structure, homodimer.

Its subcellular location is the cytoplasm. It carries out the reaction pseudouridine(1915) in 23S rRNA + S-adenosyl-L-methionine = N(3)-methylpseudouridine(1915) in 23S rRNA + S-adenosyl-L-homocysteine + H(+). In terms of biological role, specifically methylates the pseudouridine at position 1915 (m3Psi1915) in 23S rRNA. The polypeptide is Ribosomal RNA large subunit methyltransferase H (Staphylococcus aureus (strain Mu3 / ATCC 700698)).